The following is a 295-amino-acid chain: Aspartate carbamoyltransferase catalytic subunit (295 aa).

Residues arginine 49 and threonine 50 each contribute to the carbamoyl phosphate site. An L-aspartate-binding site is contributed by lysine 77. Carbamoyl phosphate is bound by residues arginine 99, histidine 127, and glutamine 130. The L-aspartate site is built by arginine 161 and arginine 212. 2 residues coordinate carbamoyl phosphate: glycine 251 and proline 252.

The protein belongs to the aspartate/ornithine carbamoyltransferase superfamily. ATCase family. In terms of assembly, heterododecamer (2C3:3R2) of six catalytic PyrB chains organized as two trimers (C3), and six regulatory PyrI chains organized as three dimers (R2).

The enzyme catalyses carbamoyl phosphate + L-aspartate = N-carbamoyl-L-aspartate + phosphate + H(+). It functions in the pathway pyrimidine metabolism; UMP biosynthesis via de novo pathway; (S)-dihydroorotate from bicarbonate: step 2/3. Functionally, catalyzes the condensation of carbamoyl phosphate and aspartate to form carbamoyl aspartate and inorganic phosphate, the committed step in the de novo pyrimidine nucleotide biosynthesis pathway. The protein is Aspartate carbamoyltransferase catalytic subunit of Campylobacter jejuni subsp. doylei (strain ATCC BAA-1458 / RM4099 / 269.97).